The following is a 359-amino-acid chain: Hyaluronan and proteoglycan link protein 3 (359 aa).

The N-terminal stretch at 1 to 17 (MSLLFLVLLSPFPCVLG) is a signal peptide. One can recognise an Ig-like V-type domain in the interval 48 to 164 (KLVVETTEES…ESGLVELELR (117 aa)). 5 cysteine pairs are disulfide-bonded: Cys-70–Cys-146, Cys-188–Cys-259, Cys-212–Cys-233, Cys-286–Cys-355, and Cys-311–Cys-332. 2 consecutive Link domains span residues 166–261 (VVFP…FCFA) and 266–357 (GRVY…YCYV).

The protein belongs to the HAPLN family.

Its subcellular location is the secreted. The protein localises to the extracellular space. It is found in the extracellular matrix. Functionally, may function in hyaluronic acid binding. This is Hyaluronan and proteoglycan link protein 3 (Hapln3) from Mus musculus (Mouse).